The chain runs to 356 residues: Tyrosine recombinase XerS (356 aa).

The Core-binding (CB) domain maps to 16-121 (IMPWYVLEYY…ALSSLFKYLT (106 aa)). The Tyr recombinase domain maps to 169–354 (EFLEYIDCEY…VNDEQKNALD (186 aa)). Residues Arg-210, Lys-234, His-306, Arg-309, and His-332 contribute to the active site. Tyr-341 acts as the O-(3'-phospho-DNA)-tyrosine intermediate in catalysis.

The protein belongs to the 'phage' integrase family. XerS subfamily.

Its subcellular location is the cytoplasm. Its activity is regulated as follows. FtsK is required for recombination. Functionally, site-specific tyrosine recombinase, which acts by catalyzing the cutting and rejoining of the recombining DNA molecules. Essential to convert dimers of the bacterial chromosome into monomers to permit their segregation at cell division. The polypeptide is Tyrosine recombinase XerS (Streptococcus agalactiae serotype Ia (strain ATCC 27591 / A909 / CDC SS700)).